We begin with the raw amino-acid sequence, 682 residues long: MGLITLILALIVVLFVCVFASNSSKPANNASFADNGAQRTAREFGPAARGGELLEFERWFKDTLATVFAQKAEKVANPTRAWNAETVFDNLSPWTSAADFGTVCHTLIGYCVRYNSPGDALHHSPDLANNLISGLRAICARLPDPPPHQQAPWGPVADWYHFTITMPEVFMTVTIVLDNTPHYDEAAALTRHWLALYLPTAVTSMGWHRTAGNAMRMGVPYAYGQLLRGYSAQQIAQEPGVQETLKTVAFPYVAAGNGLHPDSIYIDHLDVRAYGYLINSFFTFAYYTRLFGADVVNTEGLTRAIENVGSPEGVVVPGVMSRNGTLYSNVIGNFVDYPIAVHSADLSKVLTKLSDSYYGAVVGATTRLAYYEADPTNNTQAPLWTMTRRIWNRRARVINYNANTVMFESGIILQSLNGVLRVPSTTTSTQSFRPAVGKTALAKTRTAGAILVHARFAEMNNLQFKSCTLFYDHGMFQLYYNIGVEPNSLNNVNGRVVVLSRDTSVNTNDLSFEAQRLNNNNSSDGSAFNGVVCQRVPITNFNVPSLTVRSPSASVELVEQIISFQNMYTASAVACYKLNVEGHSDALRAYRINMDEVVYVTTGEGVKALFAYPWLMLKEDAAVVFMSANEDLVVPMSVINNAFSAIDEPGLQYAPVNCFLYGNGFRLNDSLANLQFQFEIIN.

Belongs to the baculoviridae E66 family.

The protein localises to the virion membrane. Its function is as follows. Component of the polyhedra envelope. The chain is Occlusion-derived virus envelope protein E66 from Orgyia pseudotsugata (Douglas-fir tussock moth).